Here is a 1002-residue protein sequence, read N- to C-terminus: Copper-transporting ATPase HMA5 (1002 aa).

Over residues 32-48 the composition is skewed to low complexity; it reads RPRYPSMPRRPRSAAVA. The disordered stretch occupies residues 32–63; sequence RPRYPSMPRRPRSAAVAGEGGEGGGGGGDGDL. The segment covering 49–60 has biased composition (gly residues); the sequence is GEGGEGGGGGGD. 3 consecutive HMA domains span residues 75–141, 153–219, and 228–294; these read KVAV…FEAK, LVCR…FEAI, and SRID…SGDL. 4 residues coordinate Cu(+): C86, C89, C164, and C167. 8 helical membrane-spanning segments follow: residues 320–340, 354–374, 392–412, 425–445, 585–605, 624–644, 943–963, and 972–992; these read FLWS…FMYI, MMSI…FVIG, MDVL…YSIL, FFET…LEIL, VFVP…FLAG, LALQ…LGLA, YVWA…VLFP, and WVAG…SLLL.

This sequence belongs to the cation transport ATPase (P-type) (TC 3.A.3) family. Type IB subfamily. In terms of tissue distribution, expressed in root pericycle cells, xylem region of diffuse vascular bundles in the first node, and vascular tissues of peduncle, rachis and husk.

The protein localises to the cell membrane. The catalysed reaction is Cu(+)(in) + ATP + H2O = Cu(+)(out) + ADP + phosphate + H(+). Copper (Cu) transporter that plays an essential role in promoting translocation of Cu from roots to shoots. Involved in loading Cu to the xylem of the roots and other organs, including panicles. The polypeptide is Copper-transporting ATPase HMA5 (Oryza sativa subsp. japonica (Rice)).